The sequence spans 302 residues: UDP-N-acetylenolpyruvoylglucosamine reductase (302 aa).

Positions 32–195 (LGGPADLLAR…VTVTLELVPD (164 aa)) constitute an FAD-binding PCMH-type domain. Arg-175 is an active-site residue. Ser-224 serves as the catalytic Proton donor. Glu-294 is a catalytic residue.

Belongs to the MurB family. Requires FAD as cofactor.

The protein localises to the cytoplasm. The catalysed reaction is UDP-N-acetyl-alpha-D-muramate + NADP(+) = UDP-N-acetyl-3-O-(1-carboxyvinyl)-alpha-D-glucosamine + NADPH + H(+). It participates in cell wall biogenesis; peptidoglycan biosynthesis. Cell wall formation. The sequence is that of UDP-N-acetylenolpyruvoylglucosamine reductase from Moorella thermoacetica (strain ATCC 39073 / JCM 9320).